Consider the following 170-residue polypeptide: Siroheme decarboxylase NirL subunit (170 aa).

It belongs to the Ahb/Nir family. Probably forms a complex composed of NirD, NirL, NirG and NirH. All proteins are required for the total conversion of siroheme to didecarboxysiroheme.

The enzyme catalyses siroheme + 2 H(+) = 12,18-didecarboxysiroheme + 2 CO2. The protein operates within porphyrin-containing compound metabolism. In terms of biological role, involved in heme d1 biosynthesis. Catalyzes the decarboxylation of siroheme into didecarboxysiroheme. The sequence is that of Siroheme decarboxylase NirL subunit from Stutzerimonas stutzeri (Pseudomonas stutzeri).